Here is a 339-residue protein sequence, read N- to C-terminus: Store-operated calcium entry-associated regulatory factor (339 aa).

The first 30 residues, 1–30 (MAAACGPGAAGYCLLLGLHLFLLTAGPALG), serve as a signal peptide directing secretion. Residues 31–173 (WNDPDRMLLR…KWSSADSCNM (143 aa)) are Lumenal-facing. The helical transmembrane segment at 174 to 194 (SGLITIVVLLGIAFVVYKLFL) threads the bilayer. The Cytoplasmic segment spans residues 195–339 (SDGQYSPPPY…ASGYGGTRRR (145 aa)). Over residues 318–330 (SVCSNSDTKTRTA) the composition is skewed to polar residues. The disordered stretch occupies residues 318-339 (SVCSNSDTKTRTASGYGGTRRR).

The protein belongs to the SARAF family. As to quaternary structure, interacts with STIM1; the interaction is inhibited by the interaction of STIM1 with EFHB. In terms of tissue distribution, highly expressed in macrophages.

It is found in the endoplasmic reticulum membrane. In terms of biological role, negative regulator of store-operated Ca(2+) entry (SOCE) involved in protecting cells from Ca(2+) overfilling. In response to cytosolic Ca(2+) elevation after endoplasmic reticulum Ca(2+) refilling, promotes a slow inactivation of STIM (STIM1 or STIM2)-dependent SOCE activity: possibly act by facilitating the deoligomerization of STIM to efficiently turn off ORAI when the endoplasmic reticulum lumen is filled with the appropriate Ca(2+) levels, and thus preventing the overload of the cell with excessive Ca(2+) ions. The polypeptide is Store-operated calcium entry-associated regulatory factor (SARAF) (Homo sapiens (Human)).